Here is a 639-residue protein sequence, read N- to C-terminus: Threonine--tRNA ligase (639 aa).

The TGS domain occupies 1 to 61 (MIKVALKDGS…DTDCDLNLFK (61 aa)). The interval 242–532 (DHRKLGKELG…LIEHYAGKFP (291 aa)) is catalytic. The Zn(2+) site is built by C333, H384, and H509.

It belongs to the class-II aminoacyl-tRNA synthetase family. As to quaternary structure, homodimer. Requires Zn(2+) as cofactor.

It is found in the cytoplasm. It carries out the reaction tRNA(Thr) + L-threonine + ATP = L-threonyl-tRNA(Thr) + AMP + diphosphate + H(+). Catalyzes the attachment of threonine to tRNA(Thr) in a two-step reaction: L-threonine is first activated by ATP to form Thr-AMP and then transferred to the acceptor end of tRNA(Thr). Also edits incorrectly charged L-seryl-tRNA(Thr). This Clostridioides difficile (strain 630) (Peptoclostridium difficile) protein is Threonine--tRNA ligase.